We begin with the raw amino-acid sequence, 313 residues long: Porphobilinogen deaminase (313 aa).

Residue Cys241 is modified to S-(dipyrrolylmethanemethyl)cysteine.

Belongs to the HMBS family. In terms of assembly, monomer. Dipyrromethane is required as a cofactor.

The enzyme catalyses 4 porphobilinogen + H2O = hydroxymethylbilane + 4 NH4(+). It participates in porphyrin-containing compound metabolism; protoporphyrin-IX biosynthesis; coproporphyrinogen-III from 5-aminolevulinate: step 2/4. The protein operates within porphyrin-containing compound metabolism; chlorophyll biosynthesis. Tetrapolymerization of the monopyrrole PBG into the hydroxymethylbilane pre-uroporphyrinogen in several discrete steps. The protein is Porphobilinogen deaminase of Chlorobium chlorochromatii (strain CaD3).